The sequence spans 138 residues: MAKAIPRRSSRRNGRIGSRKSARRIPKGVIHVQASFNNTIVTVTDVRGRVVSWSSAGTSGFKGTRRGTPFAAETAASNAIRTVVDRGMLRAEVMIKGPGLGRDAALRAILQSGILLTFVRDVTPMPHNGCRPPKKRRV.

Residues 1 to 23 (MAKAIPRRSSRRNGRIGSRKSAR) are disordered.

The protein belongs to the universal ribosomal protein uS11 family. Part of the 30S ribosomal subunit.

The protein localises to the plastid. It localises to the chloroplast. The polypeptide is Small ribosomal subunit protein uS11c (Ipomoea purpurea (Common morning glory)).